Reading from the N-terminus, the 957-residue chain is Glycine dehydrogenase (decarboxylating) (957 aa).

Lysine 708 carries the post-translational modification N6-(pyridoxal phosphate)lysine.

The protein belongs to the GcvP family. As to quaternary structure, the glycine cleavage system is composed of four proteins: P, T, L and H. Pyridoxal 5'-phosphate is required as a cofactor.

It catalyses the reaction N(6)-[(R)-lipoyl]-L-lysyl-[glycine-cleavage complex H protein] + glycine + H(+) = N(6)-[(R)-S(8)-aminomethyldihydrolipoyl]-L-lysyl-[glycine-cleavage complex H protein] + CO2. The glycine cleavage system catalyzes the degradation of glycine. The P protein binds the alpha-amino group of glycine through its pyridoxal phosphate cofactor; CO(2) is released and the remaining methylamine moiety is then transferred to the lipoamide cofactor of the H protein. The protein is Glycine dehydrogenase (decarboxylating) of Escherichia coli (strain UTI89 / UPEC).